Here is a 212-residue protein sequence, read N- to C-terminus: Hydroxyacylglutathione hydrolase GloC (212 aa).

Residues histidine 55, histidine 57, aspartate 59, histidine 60, histidine 132, aspartate 151, and histidine 192 each coordinate Zn(2+).

The protein belongs to the metallo-beta-lactamase superfamily. Glyoxalase II family. Requires Zn(2+) as cofactor.

It carries out the reaction an S-(2-hydroxyacyl)glutathione + H2O = a 2-hydroxy carboxylate + glutathione + H(+). The catalysed reaction is (R)-S-lactoylglutathione + H2O = (R)-lactate + glutathione + H(+). It functions in the pathway secondary metabolite metabolism; methylglyoxal degradation; (R)-lactate from methylglyoxal: step 2/2. Functionally, type II glyoxalase, isozyme of GloB, that hydrolyzes (R)-S-lactoylglutathione to (R)-lactate and glutathione. Plays a role in methylglyoxal (MG) detoxification. The chain is Hydroxyacylglutathione hydrolase GloC from Haemophilus influenzae (strain ATCC 51907 / DSM 11121 / KW20 / Rd).